Here is a 75-residue protein sequence, read N- to C-terminus: Tautomerase PptA (75 aa).

The active-site Proton acceptor; via imino nitrogen is Pro2.

The protein belongs to the 4-oxalocrotonate tautomerase family. PptA subfamily. As to quaternary structure, homodimer.

Its subcellular location is the cytoplasm. The chain is Tautomerase PptA from Escherichia coli O139:H28 (strain E24377A / ETEC).